Consider the following 305-residue polypeptide: Spermatogenesis-associated protein 4 (305 aa).

One can recognise a Calponin-homology (CH) domain in the interval 49–155; the sequence is SRLSRSVLRW…EEVYTLLTHR (107 aa).

Its subcellular location is the nucleus. May play a role in apoptosis regulation. The chain is Spermatogenesis-associated protein 4 (SPATA4) from Pan troglodytes (Chimpanzee).